Here is a 324-residue protein sequence, read N- to C-terminus: Malate dehydrogenase (324 aa).

NAD(+) is bound by residues 7 to 13 (GAAGGIG) and aspartate 34. Residues arginine 88 and arginine 94 each coordinate substrate. NAD(+) contacts are provided by residues asparagine 101 and 124–126 (VTN). The substrate site is built by asparagine 126 and arginine 160. Histidine 184 functions as the Proton acceptor in the catalytic mechanism. Residue methionine 238 participates in NAD(+) binding.

The protein belongs to the LDH/MDH superfamily. MDH type 1 family. Homodimer.

The enzyme catalyses (S)-malate + NAD(+) = oxaloacetate + NADH + H(+). Its function is as follows. Catalyzes the reversible oxidation of malate to oxaloacetate. This Haemophilus ducreyi (strain 35000HP / ATCC 700724) protein is Malate dehydrogenase.